The chain runs to 158 residues: Endoribonuclease YbeY (158 aa).

Residues His-121, His-125, and His-131 each contribute to the Zn(2+) site.

The protein belongs to the endoribonuclease YbeY family. Zn(2+) serves as cofactor.

The protein resides in the cytoplasm. Its function is as follows. Single strand-specific metallo-endoribonuclease involved in late-stage 70S ribosome quality control and in maturation of the 3' terminus of the 16S rRNA. This chain is Endoribonuclease YbeY, found in Exiguobacterium sibiricum (strain DSM 17290 / CCUG 55495 / CIP 109462 / JCM 13490 / 255-15).